Consider the following 614-residue polypeptide: Chaperone protein DnaK (614 aa).

Thr174 is subject to Phosphothreonine; by autocatalysis. The segment at 576–614 is disordered; sequence QTGGAAPGPDMGADPGAGGAQGDDNVVDAEYTEVDKDQK. Low complexity predominate over residues 578–589; the sequence is GGAAPGPDMGAD.

Belongs to the heat shock protein 70 family.

Acts as a chaperone. This is Chaperone protein DnaK from Desulfitobacterium hafniense (strain DSM 10664 / DCB-2).